The chain runs to 621 residues: Chaperone protein HscA homolog (621 aa).

This sequence belongs to the heat shock protein 70 family.

Functionally, chaperone involved in the maturation of iron-sulfur cluster-containing proteins. Has a low intrinsic ATPase activity which is markedly stimulated by HscB. This chain is Chaperone protein HscA homolog, found in Azotobacter vinelandii (strain DJ / ATCC BAA-1303).